The sequence spans 130 residues: Small ribosomal subunit protein uS8 (130 aa).

It belongs to the universal ribosomal protein uS8 family. Part of the 30S ribosomal subunit. Contacts proteins S5 and S12.

In terms of biological role, one of the primary rRNA binding proteins, it binds directly to 16S rRNA central domain where it helps coordinate assembly of the platform of the 30S subunit. The chain is Small ribosomal subunit protein uS8 from Ruegeria sp. (strain TM1040) (Silicibacter sp.).